A 309-amino-acid polypeptide reads, in one-letter code: GTP cyclohydrolase MptA 2 (309 aa).

The protein belongs to the GTP cyclohydrolase IV family. Homodimer. Requires Fe(2+) as cofactor.

It catalyses the reaction GTP + H2O = 7,8-dihydroneopterin 2',3'-cyclic phosphate + formate + diphosphate + H(+). It functions in the pathway cofactor biosynthesis; 5,6,7,8-tetrahydromethanopterin biosynthesis. Functionally, converts GTP to 7,8-dihydro-D-neopterin 2',3'-cyclic phosphate, the first intermediate in the biosynthesis of coenzyme methanopterin. In Methanocella arvoryzae (strain DSM 22066 / NBRC 105507 / MRE50), this protein is GTP cyclohydrolase MptA 2.